Consider the following 341-residue polypeptide: Glyceraldehyde-3-phosphate dehydrogenase (341 aa).

Residues 11–12 (TI) and Gly110 each bind NAD(+). 139–141 (SCN) is a D-glyceraldehyde 3-phosphate binding site. Cys140 serves as the catalytic Nucleophile. An NAD(+)-binding site is contributed by Arg168. Residue 194-195 (HG) coordinates D-glyceraldehyde 3-phosphate. Position 302 (Gln302) interacts with NAD(+).

It belongs to the glyceraldehyde-3-phosphate dehydrogenase family. In terms of assembly, homotetramer.

The protein localises to the cytoplasm. It catalyses the reaction D-glyceraldehyde 3-phosphate + phosphate + NADP(+) = (2R)-3-phospho-glyceroyl phosphate + NADPH + H(+). The enzyme catalyses D-glyceraldehyde 3-phosphate + phosphate + NAD(+) = (2R)-3-phospho-glyceroyl phosphate + NADH + H(+). Its pathway is carbohydrate degradation; glycolysis; pyruvate from D-glyceraldehyde 3-phosphate: step 1/5. This is Glyceraldehyde-3-phosphate dehydrogenase from Methanoculleus marisnigri (strain ATCC 35101 / DSM 1498 / JR1).